The chain runs to 264 residues: Mannose-specific lectin CEA (264 aa).

The first 23 residues, 1–23, serve as a signal peptide directing secretion; that stretch reads MAKLLLFLLPAILGLLVPRSAVA. Bulb-type lectin domains are found at residues 26-131 and 145-252; these read TNYL…PWVP and NNLL…PQAK. Residues 51–55, Tyr59, Trp63, Gln64, 170–174, Tyr178, and 182–185 each bind beta-D-mannose; these read QDDCN, QGDCN, and YGWQ. The Carbohydrate-binding motif 1 motif lies at 51–59; it reads QDDCNLVLY. Disulfide bonds link Cys54/Cys74 and Cys173/Cys195. Positions 170-178 match the Carbohydrate-binding motif 2 motif; the sequence is QGDCNLVLY.

As to quaternary structure, forms heterotetramer of 2 chains 1 and 2 chains 2 arranged as a dimer of chain 1 and chain 2 heterodimers.

The protein localises to the secreted. Its function is as follows. Mannose-specific lectin. Shows agglutinating activity towards erythrocytes from rabbit. Has insecticidal activity against cotton aphids and other hemipteran insects. This is Mannose-specific lectin CEA from Colocasia esculenta (Wild taro).